A 602-amino-acid polypeptide reads, in one-letter code: Glutamine--fructose-6-phosphate aminotransferase [isomerizing] (602 aa).

Residue cysteine 2 is the Nucleophile; for GATase activity of the active site. The region spanning 2-217 (CGIVGVVGNT…DQELVIVKAD (216 aa)) is the Glutamine amidotransferase type-2 domain. A disordered region spans residues 67 to 87 (IGHTRWATHGKPTEDNAHPHR). Residues 77 to 87 (KPTEDNAHPHR) show a composition bias toward basic and acidic residues. SIS domains follow at residues 283 to 422 (IIKA…ANGN) and 455 to 592 (VREL…VDKP). The active-site For Fru-6P isomerization activity is lysine 597.

In terms of assembly, homodimer.

Its subcellular location is the cytoplasm. It carries out the reaction D-fructose 6-phosphate + L-glutamine = D-glucosamine 6-phosphate + L-glutamate. Catalyzes the first step in hexosamine metabolism, converting fructose-6P into glucosamine-6P using glutamine as a nitrogen source. The polypeptide is Glutamine--fructose-6-phosphate aminotransferase [isomerizing] (Streptococcus pneumoniae (strain ATCC BAA-255 / R6)).